The primary structure comprises 475 residues: Membrane-bound lytic murein transglycosylase F (475 aa).

A signal peptide spans 1-15; the sequence is MKKLLLILCCITLLA. The non-LT domain stretch occupies residues 16–258; the sequence is ACQKVVVEQE…HLNEKYFAHV (243 aa). The tract at residues 259 to 475 is LT domain; the sequence is KRFDYVDTRA…KTEAAQPQQP (217 aa). The active site involves Glu303.

The protein in the N-terminal section; belongs to the bacterial solute-binding protein 3 family. In the C-terminal section; belongs to the transglycosylase Slt family.

It is found in the cell outer membrane. It catalyses the reaction Exolytic cleavage of the (1-&gt;4)-beta-glycosidic linkage between N-acetylmuramic acid (MurNAc) and N-acetylglucosamine (GlcNAc) residues in peptidoglycan, from either the reducing or the non-reducing ends of the peptidoglycan chains, with concomitant formation of a 1,6-anhydrobond in the MurNAc residue.. Functionally, murein-degrading enzyme that degrades murein glycan strands and insoluble, high-molecular weight murein sacculi, with the concomitant formation of a 1,6-anhydromuramoyl product. Lytic transglycosylases (LTs) play an integral role in the metabolism of the peptidoglycan (PG) sacculus. Their lytic action creates space within the PG sacculus to allow for its expansion as well as for the insertion of various structures such as secretion systems and flagella. This Shewanella halifaxensis (strain HAW-EB4) protein is Membrane-bound lytic murein transglycosylase F.